Here is a 222-residue protein sequence, read N- to C-terminus: Beta-amylase (222 aa).

T36 contributes to the substrate binding site. E74 serves as the catalytic Proton acceptor. Residues 75 to 76 and R114 each bind substrate; that span reads NA.

Belongs to the glycosyl hydrolase 14 family.

It carries out the reaction Hydrolysis of (1-&gt;4)-alpha-D-glucosidic linkages in polysaccharides so as to remove successive maltose units from the non-reducing ends of the chains.. The protein is Beta-amylase (BMY1) of Secale cereale (Rye).